Consider the following 73-residue polypeptide: UPF0235 protein LA_1736 (73 aa).

The protein belongs to the UPF0235 family.

In Leptospira interrogans serogroup Icterohaemorrhagiae serovar Lai (strain 56601), this protein is UPF0235 protein LA_1736.